Reading from the N-terminus, the 165-residue chain is Basic leucine zipper 43 (165 aa).

The 64-residue stretch at 70–133 (NERKQKRKIS…EKVIEENVQL (64 aa)) folds into the bZIP domain. The segment at 72–93 (RKQKRKISNRESARRSRMRKQR) is basic motif. A leucine-zipper region spans residues 98 to 112 (LWSQVMWLRDENHQL).

In terms of assembly, forms heterodimers with BZIP34 and BZIP61.

It localises to the nucleus. Its function is as follows. Probable transcription factor involved in somatic embryogenesis. Acts as a positive regulator of BHLH109. This chain is Basic leucine zipper 43, found in Arabidopsis thaliana (Mouse-ear cress).